The chain runs to 511 residues: Adenosine deaminase 2 (511 aa).

The signal sequence occupies residues 1 to 29 (MLVDGPSEWPALRFLLLAVAMSFFGSALS). The tract at residues 30 to 100 (IDETRAHLLL…HLIERSQVFN (71 aa)) is dimerization. Zn(2+) contacts are provided by histidine 112 and histidine 114. Aspartate 115 lines the substrate pocket. Asparagine 127 carries N-linked (GlcNAc...) asparagine glycosylation. Residues 127 to 185 (NVTYRPHCHICFTPKGIMQFRFAHPTPRTSEKCSKWILLEDYRKRVQNVTEFDDSLLRN) form a PRB domain region. A disulfide bridge links cysteine 137 with cysteine 159. N-linked (GlcNAc...) asparagine glycans are attached at residues asparagine 174 and asparagine 185. Residues 204-211 (WSKFETIF), histidine 293, and glycine 326 contribute to the substrate site. Histidine 356 serves as a coordination point for Zn(2+). Catalysis depends on glutamate 359, which acts as the Proton donor. Residue asparagine 378 is glycosylated (N-linked (GlcNAc...) asparagine). The Proton acceptor role is filled by histidine 384. Residue aspartate 441 participates in Zn(2+) binding. Aspartate 442 contacts substrate.

It belongs to the metallo-dependent hydrolases superfamily. Adenosine and AMP deaminases family. ADGF subfamily. As to quaternary structure, homodimer. Interacts with adenosine receptors. Binds heparin. The cofactor is Zn(2+).

It localises to the secreted. The catalysed reaction is adenosine + H2O + H(+) = inosine + NH4(+). In terms of biological role, adenosine deaminase that may contribute to the degradation of extracellular adenosine, a signaling molecule that controls a variety of cellular responses. Requires elevated adenosine levels for optimal enzyme activity. Binds to cell surfaces via proteoglycans and may play a role in the regulation of cell proliferation and differentiation, independently of its enzyme activity. The polypeptide is Adenosine deaminase 2 (Pongo abelii (Sumatran orangutan)).